The chain runs to 170 residues: Ribulose bisphosphate carboxylase small subunit, chloroplastic (170 aa).

2 transit peptides (chloroplast) span residues 1 to 46 and 1 to 47; these read MAPT…GRIR and MAPT…RIRC.

It belongs to the RuBisCO small chain family. In terms of assembly, heterohexadecamer of 8 large and 8 small subunits.

Its subcellular location is the plastid. It is found in the chloroplast. In terms of biological role, ruBisCO catalyzes two reactions: the carboxylation of D-ribulose 1,5-bisphosphate, the primary event in carbon dioxide fixation, as well as the oxidative fragmentation of the pentose substrate. Both reactions occur simultaneously and in competition at the same active site. Although the small subunit is not catalytic it is essential for maximal activity. The polypeptide is Ribulose bisphosphate carboxylase small subunit, chloroplastic (Zea mays (Maize)).